The sequence spans 147 residues: MPTYAPKAGDTTCSWYVIDATDVVLGRLAAVAATLLRGKHKPTFAPNVDGGDFVIVINADKVAISGDKVQHKMVYRHSGYPGGLRKRTIGELMQKHPDRVVEKAIVGMLPKNKLSRQIQRKLRVYAGPDHPHSAQQPVPFEIKQVAQ.

Belongs to the universal ribosomal protein uL13 family. As to quaternary structure, part of the 50S ribosomal subunit.

Functionally, this protein is one of the early assembly proteins of the 50S ribosomal subunit, although it is not seen to bind rRNA by itself. It is important during the early stages of 50S assembly. The chain is Large ribosomal subunit protein uL13 from Mycobacterium leprae (strain Br4923).